We begin with the raw amino-acid sequence, 290 residues long: Cbb3-type cytochrome c oxidase subunit FixP (290 aa).

Residues 1–32 (MTDHSEFDSVSGKTTTGHEWDGIKELNTPLPR) lie on the Cytoplasmic side of the membrane. Residues 33 to 53 (WWVICFYLTIVWAIGYWIVYP) traverse the membrane as a helical segment. Over 54-290 (AWPLISSNTT…VYVHSLGGGK (237 aa)) the chain is Periplasmic. Cytochrome c domains lie at 109 to 198 (LARA…RSLS) and 206 to 287 (YDAA…HSLG). Positions 122, 125, 126, 173, 219, 222, 223, and 264 each coordinate heme c.

This sequence belongs to the CcoP / FixP family. As to quaternary structure, component of the cbb3-type cytochrome c oxidase at least composed of FixN, FixO, FixQ and FixP. Heme c serves as cofactor.

The protein resides in the cell inner membrane. The protein operates within energy metabolism; oxidative phosphorylation. In terms of biological role, C-type cytochrome. Part of the cbb3-type cytochrome c oxidase complex. FixP subunit is required for transferring electrons from donor cytochrome c via its heme groups to FixO subunit. From there, electrons are shuttled to the catalytic binuclear center of FixN subunit where oxygen reduction takes place. The complex also functions as a proton pump. The polypeptide is Cbb3-type cytochrome c oxidase subunit FixP (Bradyrhizobium diazoefficiens (strain JCM 10833 / BCRC 13528 / IAM 13628 / NBRC 14792 / USDA 110)).